The primary structure comprises 118 residues: Large ribosomal subunit protein uL22 (118 aa).

The protein belongs to the universal ribosomal protein uL22 family. Part of the 50S ribosomal subunit.

Its function is as follows. This protein binds specifically to 23S rRNA; its binding is stimulated by other ribosomal proteins, e.g. L4, L17, and L20. It is important during the early stages of 50S assembly. It makes multiple contacts with different domains of the 23S rRNA in the assembled 50S subunit and ribosome. Functionally, the globular domain of the protein is located near the polypeptide exit tunnel on the outside of the subunit, while an extended beta-hairpin is found that lines the wall of the exit tunnel in the center of the 70S ribosome. This Treponema denticola (strain ATCC 35405 / DSM 14222 / CIP 103919 / JCM 8153 / KCTC 15104) protein is Large ribosomal subunit protein uL22.